The chain runs to 113 residues: EVKLEESGGGLVQPGGSMKLSCVASGFTFSNYWMNWVRQSPEKGLEWVAEIRLKSHNYATHYAESVKGRFTISRDDSKSSVYLQMNNLRAEDTGIYYCTTGFAYWGQGTLVPV.

The region spanning 1-113 (EVKLEESGGG…YWGQGTLVPV (113 aa)) is the Ig-like domain. A disulfide bridge links Cys22 with Cys98.

The polypeptide is Ig heavy chain V-III region U61 (Mus musculus (Mouse)).